The following is a 628-amino-acid chain: tRNA uridine 5-carboxymethylaminomethyl modification enzyme MnmG (628 aa).

Glycine 13 to glycine 18 is an FAD binding site. Residue glycine 273 to phenylalanine 287 coordinates NAD(+).

Belongs to the MnmG family. Homodimer. Heterotetramer of two MnmE and two MnmG subunits. Requires FAD as cofactor.

It is found in the cytoplasm. NAD-binding protein involved in the addition of a carboxymethylaminomethyl (cmnm) group at the wobble position (U34) of certain tRNAs, forming tRNA-cmnm(5)s(2)U34. In Buchnera aphidicola subsp. Acyrthosiphon pisum (strain Tuc7), this protein is tRNA uridine 5-carboxymethylaminomethyl modification enzyme MnmG.